The primary structure comprises 341 residues: Ribosomal RNA small subunit methyltransferase C (341 aa).

The protein belongs to the methyltransferase superfamily. RsmC family. In terms of assembly, monomer.

It localises to the cytoplasm. It carries out the reaction guanosine(1207) in 16S rRNA + S-adenosyl-L-methionine = N(2)-methylguanosine(1207) in 16S rRNA + S-adenosyl-L-homocysteine + H(+). Functionally, specifically methylates the guanine in position 1207 of 16S rRNA in the 30S particle. The polypeptide is Ribosomal RNA small subunit methyltransferase C (Shewanella amazonensis (strain ATCC BAA-1098 / SB2B)).